We begin with the raw amino-acid sequence, 156 residues long: MPRKGPAPKRPLVLDPVYGSPLVTQLINKILVDGKKSTAERIVYGALEGAREKSGGDPVAALKKAMENIKPSLEVKSRRVGGATYQVPVEVKPGRATALALRWLVGYSKARREKTMTERLRNEILDACNGLGAAVKRREDTHKMAEANRAFAHYRW.

This sequence belongs to the universal ribosomal protein uS7 family. Part of the 30S ribosomal subunit. Contacts proteins S9 and S11.

One of the primary rRNA binding proteins, it binds directly to 16S rRNA where it nucleates assembly of the head domain of the 30S subunit. Is located at the subunit interface close to the decoding center, probably blocks exit of the E-site tRNA. The chain is Small ribosomal subunit protein uS7 from Renibacterium salmoninarum (strain ATCC 33209 / DSM 20767 / JCM 11484 / NBRC 15589 / NCIMB 2235).